Here is a 250-residue protein sequence, read N- to C-terminus: Solute carrier family 66 member 2 (250 aa).

The 67-residue stretch at Arg14–Gln80 folds into the PQ-loop 1 domain. Helical transmembrane passes span Met15–Pro35, Phe49–Phe69, His72–Leu92, Phe118–Val138, Leu151–Tyr173, and Phe212–Leu232. The region spanning Ser149 to Cys215 is the PQ-loop 2 domain.

It is found in the membrane. The sequence is that of Solute carrier family 66 member 2 (slc66a2) from Xenopus laevis (African clawed frog).